A 333-amino-acid polypeptide reads, in one-letter code: Complement C1q and tumor necrosis factor-related protein 9B (333 aa).

Positions 1 to 19 (MRIWWLLLAIEICTGNINS) are cleaved as a signal peptide. 3 consecutive Collagen-like domains span residues 24-82 (RQGH…DGKV), 95-154 (GSPG…PGPM), and 155-191 (GPIG…GEKG). The interval 24 to 189 (RQGHPGIPGN…IRGWKGDRGE (166 aa)) is disordered. A compositionally biased stretch (low complexity) spans 26–40 (GHPGIPGNPGHNGLP). Composition is skewed to basic and acidic residues over residues 42 to 55 (RDGR…KGDA) and 69 to 88 (TSGE…KGIK). Residues 197–333 (LVLPKSAFTV…FTGFLLFSSQ (137 aa)) enclose the C1q domain.

As to quaternary structure, interacts with CTRP9A and ADIPOQ. Forms heterotrimers and heterooligomeric complexes with CTRP9A. In terms of tissue distribution, expressed at low levels. Not expressed in adipose tissues.

It localises to the secreted. Functionally, probable adipokine. Activates AMPK, AKT, and p44/42 MAPK signaling pathways. In Homo sapiens (Human), this protein is Complement C1q and tumor necrosis factor-related protein 9B (C1QTNF9B).